The following is an 87-amino-acid chain: Large ribosomal subunit protein eL20 (87 aa).

This sequence belongs to the eukaryotic ribosomal protein eL20 family. In terms of assembly, part of the 50S ribosomal subunit. Binds 23S rRNA.

The polypeptide is Large ribosomal subunit protein eL20 (Staphylothermus marinus (strain ATCC 43588 / DSM 3639 / JCM 9404 / F1)).